Consider the following 319-residue polypeptide: Taste receptor type 2 member 7 (319 aa).

Over 1–9 the chain is Extracellular; that stretch reads MADKVQTTL. A helical membrane pass occupies residues 10-30; that stretch reads LFLAVGEFSVGILGNAFIGLV. Topologically, residues 31–55 are cytoplasmic; the sequence is NCMDWVKKRKIASIDLILTSLAISR. The helical transmembrane segment at 56–76 threads the bilayer; it reads ICLLCVILLDCFILVLYPDVY. The Extracellular segment spans residues 77 to 94; it reads ATGKEMRIIDFFWTLTNH. A helical membrane pass occupies residues 95 to 115; the sequence is LSIWFATCLSIYYXFRIANFF. The Cytoplasmic segment spans residues 116-128; that stretch reads HPLFLWMKWRIDR. Residues 129–149 form a helical membrane-spanning segment; it reads VISWILLGCVVLSVFISLPAT. The Extracellular segment spans residues 150–187; it reads ENLNADFRFCVKAKRKTNLTWSCRVNKTQHASTKLFLN. N-linked (GlcNAc...) asparagine glycans are attached at residues N167 and N175. A helical membrane pass occupies residues 188–208; it reads LATLLPFCVCLMSFFLLILSL. The Cytoplasmic portion of the chain corresponds to 209–235; it reads RRHIRRMQLSATGCRDPSTEAHVRALK. Residues 236 to 256 form a helical membrane-spanning segment; sequence AVISFLLLFIAYYLSFLVATS. Residues 257 to 266 lie on the Extracellular side of the membrane; that stretch reads SYFMPETELA. A helical membrane pass occupies residues 267 to 287; it reads VIFGESIALIYPSSHSFILIL. The Cytoplasmic segment spans residues 288–319; it reads GNNKLRHASLKVIWKVMSILKGRKFQQHKQIG.

The protein belongs to the G-protein coupled receptor T2R family.

The protein localises to the membrane. Gustducin-coupled receptor implicated in the perception of bitter compounds in the oral cavity and the gastrointestinal tract. Signals through PLCB2 and the calcium-regulated cation channel TRPM5. The polypeptide is Taste receptor type 2 member 7 (TAS2R7) (Pan troglodytes (Chimpanzee)).